A 332-amino-acid chain; its full sequence is Phosphate acyltransferase (332 aa).

Belongs to the PlsX family. As to quaternary structure, homodimer. Probably interacts with PlsY.

Its subcellular location is the cytoplasm. The enzyme catalyses a fatty acyl-[ACP] + phosphate = an acyl phosphate + holo-[ACP]. The protein operates within lipid metabolism; phospholipid metabolism. In terms of biological role, catalyzes the reversible formation of acyl-phosphate (acyl-PO(4)) from acyl-[acyl-carrier-protein] (acyl-ACP). This enzyme utilizes acyl-ACP as fatty acyl donor, but not acyl-CoA. This Thermoanaerobacter pseudethanolicus (strain ATCC 33223 / 39E) (Clostridium thermohydrosulfuricum) protein is Phosphate acyltransferase.